The following is a 358-amino-acid chain: Acid phosphatase (358 aa).

The first 17 residues, 1–17, serve as a signal peptide directing secretion; it reads MKFSTIALPLLASAALA. 3 N-linked (GlcNAc...) asparagine glycosylation sites follow: Asn-20, Asn-27, and Asn-32. The interval 21–41 is disordered; the sequence is SSHSGTNATSHNSTVPNENSK. Mg(2+) is bound by residues Asp-49, Asp-50, and Ser-81. N-linked (GlcNAc...) asparagine glycosylation is found at Asn-92 and Asn-145. Residue Asn-156 participates in Mg(2+) binding. The active site involves Ser-189. N-linked (GlcNAc...) asparagine glycosylation is found at Asn-199 and Asn-278.

Belongs to the SurE nucleotidase family. Mg(2+) is required as a cofactor.

It localises to the secreted. The enzyme catalyses a phosphate monoester + H2O = an alcohol + phosphate. In terms of biological role, probably serves to scavenge phosphorus for growing cells. In Yarrowia lipolytica (strain CLIB 122 / E 150) (Yeast), this protein is Acid phosphatase (PHO2).